We begin with the raw amino-acid sequence, 130 residues long: Albumin-1 C (130 aa).

A signal peptide spans 1–26 (MASVKLASLIVLFATLGMFLTKNVGA). Cystine bridges form between cysteine 29–cysteine 46, cysteine 33–cysteine 48, and cysteine 41–cysteine 58. 2 consecutive propeptides follow at residues 64–69 (VFLRTN) and 123–130 (LLKSVSTA).

Post-translationally, the C-terminal glycine may be removed from PA1b. Major component of both the cotyledons and embryonic axes of mature seeds.

Its function is as follows. PA1b binds to basic 7S globulin (BG) and stimulates its phosphorylation activity. Involved in the signal transduction system to regulate the growth and differentiation as a hormone peptide. Toxic to various insects through binding to a high affinity binding site in the insect gut. The polypeptide is Albumin-1 C (Pisum sativum (Garden pea)).